Consider the following 405-residue polypeptide: Polyketide biosynthesis cytochrome P450 PksS (405 aa).

Residues 231–251 (LYSMLFLLVVAGLETTVNLLG) traverse the membrane as a helical segment. Heme is bound at residue cysteine 352.

This sequence belongs to the cytochrome P450 family.

It is found in the cell membrane. It functions in the pathway antibiotic biosynthesis; bacillaene biosynthesis. Involved in the metabolism of the antibiotic polyketide bacillaene which is involved in secondary metabolism. The substrate is dihydrobacillaene. The polypeptide is Polyketide biosynthesis cytochrome P450 PksS (pksS) (Bacillus subtilis (strain 168)).